Here is a 430-residue protein sequence, read N- to C-terminus: CinA-like protein (430 aa).

The protein belongs to the CinA family.

The chain is CinA-like protein from Prochlorococcus marinus (strain NATL1A).